Consider the following 734-residue polypeptide: Photosystem I P700 chlorophyll a apoprotein A2 (734 aa).

8 helical membrane-spanning segments follow: residues I46 to A69, L135 to Q158, L175 to I199, I273 to Y291, L330 to Y353, A369 to I395, A417 to H439, and F517 to V535. [4Fe-4S] cluster-binding residues include C559 and C568. The next 2 membrane-spanning stretches (helical) occupy residues A575–W596 and L643–I665. Chlorophyll a-binding residues include H654, M662, and Y670. W671 serves as a coordination point for phylloquinone. Residues L707–A727 form a helical membrane-spanning segment.

It belongs to the PsaA/PsaB family. As to quaternary structure, the PsaA/B heterodimer binds the P700 chlorophyll special pair and subsequent electron acceptors. PSI consists of a core antenna complex that captures photons, and an electron transfer chain that converts photonic excitation into a charge separation. The eukaryotic PSI reaction center is composed of at least 11 subunits. The cofactor is P700 is a chlorophyll a/chlorophyll a' dimer, A0 is one or more chlorophyll a, A1 is one or both phylloquinones and FX is a shared 4Fe-4S iron-sulfur center..

The protein localises to the plastid. Its subcellular location is the chloroplast thylakoid membrane. It catalyses the reaction reduced [plastocyanin] + hnu + oxidized [2Fe-2S]-[ferredoxin] = oxidized [plastocyanin] + reduced [2Fe-2S]-[ferredoxin]. Its function is as follows. PsaA and PsaB bind P700, the primary electron donor of photosystem I (PSI), as well as the electron acceptors A0, A1 and FX. PSI is a plastocyanin-ferredoxin oxidoreductase, converting photonic excitation into a charge separation, which transfers an electron from the donor P700 chlorophyll pair to the spectroscopically characterized acceptors A0, A1, FX, FA and FB in turn. Oxidized P700 is reduced on the lumenal side of the thylakoid membrane by plastocyanin. This is Photosystem I P700 chlorophyll a apoprotein A2 from Marchantia polymorpha (Common liverwort).